The chain runs to 269 residues: tRNA-cytidine(32) 2-sulfurtransferase (269 aa).

Residues 53–58 carry the PP-loop motif motif; the sequence is SGGKDS. [4Fe-4S] cluster is bound by residues C128, C131, and C218.

This sequence belongs to the TtcA family. In terms of assembly, homodimer. Requires Mg(2+) as cofactor. [4Fe-4S] cluster serves as cofactor.

The protein resides in the cytoplasm. It carries out the reaction cytidine(32) in tRNA + S-sulfanyl-L-cysteinyl-[cysteine desulfurase] + AH2 + ATP = 2-thiocytidine(32) in tRNA + L-cysteinyl-[cysteine desulfurase] + A + AMP + diphosphate + H(+). Its pathway is tRNA modification. Its function is as follows. Catalyzes the ATP-dependent 2-thiolation of cytidine in position 32 of tRNA, to form 2-thiocytidine (s(2)C32). The sulfur atoms are provided by the cysteine/cysteine desulfurase (IscS) system. The polypeptide is tRNA-cytidine(32) 2-sulfurtransferase (Pelobacter propionicus (strain DSM 2379 / NBRC 103807 / OttBd1)).